The following is a 349-amino-acid chain: NADH-quinone oxidoreductase subunit H (349 aa).

8 consecutive transmembrane segments (helical) span residues 14 to 34, 85 to 105, 120 to 140, 164 to 184, 196 to 216, 243 to 263, 285 to 305, and 324 to 344; these read LLVW…GCVA, GLFL…WAVI, LLYI…AGWA, MGFA…VDIV, ILSW…ISGV, GMAF…VAAL, AGGF…FLWF, and VFIP…FSPL.

The protein belongs to the complex I subunit 1 family. NDH-1 is composed of 14 different subunits. Subunits NuoA, H, J, K, L, M, N constitute the membrane sector of the complex.

The protein resides in the cell inner membrane. The enzyme catalyses a quinone + NADH + 5 H(+)(in) = a quinol + NAD(+) + 4 H(+)(out). Functionally, NDH-1 shuttles electrons from NADH, via FMN and iron-sulfur (Fe-S) centers, to quinones in the respiratory chain. The immediate electron acceptor for the enzyme in this species is believed to be ubiquinone. Couples the redox reaction to proton translocation (for every two electrons transferred, four hydrogen ions are translocated across the cytoplasmic membrane), and thus conserves the redox energy in a proton gradient. This subunit may bind ubiquinone. This chain is NADH-quinone oxidoreductase subunit H, found in Chromobacterium violaceum (strain ATCC 12472 / DSM 30191 / JCM 1249 / CCUG 213 / NBRC 12614 / NCIMB 9131 / NCTC 9757 / MK).